We begin with the raw amino-acid sequence, 192 residues long: Protein GrpE (192 aa).

A disordered region spans residues 1-34 (MSSKEQKTPNEQVSEEMENAAEQQVEATQETGEG). Over residues 21–31 (AEQQVEATQET) the composition is skewed to polar residues.

The protein belongs to the GrpE family. In terms of assembly, homodimer.

Its subcellular location is the cytoplasm. Participates actively in the response to hyperosmotic and heat shock by preventing the aggregation of stress-denatured proteins, in association with DnaK and GrpE. It is the nucleotide exchange factor for DnaK and may function as a thermosensor. Unfolded proteins bind initially to DnaJ; upon interaction with the DnaJ-bound protein, DnaK hydrolyzes its bound ATP, resulting in the formation of a stable complex. GrpE releases ADP from DnaK; ATP binding to DnaK triggers the release of the substrate protein, thus completing the reaction cycle. Several rounds of ATP-dependent interactions between DnaJ, DnaK and GrpE are required for fully efficient folding. The polypeptide is Protein GrpE (Yersinia enterocolitica serotype O:8 / biotype 1B (strain NCTC 13174 / 8081)).